Here is a 133-residue protein sequence, read N- to C-terminus: Small ribosomal subunit protein uS9 (133 aa).

A disordered region spans residues 111 to 133 (PRRSESKKFGGPGARARKQKSYR).

It belongs to the universal ribosomal protein uS9 family.

This is Small ribosomal subunit protein uS9 from Methanosphaera stadtmanae (strain ATCC 43021 / DSM 3091 / JCM 11832 / MCB-3).